The chain runs to 725 residues: Rab-like protein 6 (725 aa).

M1 carries the N-acetylmethionine modification. Residues 39–279 form a small GTPase-like region; the sequence is GVQYNMKIVI…IFLEMMEARS (241 aa). GTP contacts are provided by residues 50–57, 100–104, and 177–179; these read GDRNTGKT, DVVDK, and YRD. 2 disordered regions span residues 281–364 and 378–725; these read GHAS…PAPA and PAAE…YEEL. Low complexity-rich tracts occupy residues 291-325 and 343-353; these read QSPSSGSQSPVVPPSAVSTGSSSPSTPQPAPQLSL and AMPSSVHSSAP. The segment covering 410–427 has biased composition (basic and acidic residues); the sequence is GLDRSFLEDTSVPKDKKV. Phosphoserine is present on residues S414, S436, S438, S480, S482, S483, and S502. The span at 499 to 514 shows a compositional bias: polar residues; the sequence is QQCSEPETKWSSTKVS. Basic and acidic residues predominate over residues 537 to 549; the sequence is DSERPQEGKDKQV. Residues 569 to 578 are compositionally biased toward acidic residues; the sequence is DDPDFESDES. Residues S575 and S594 each carry the phosphoserine modification. Residue T597 is modified to Phosphothreonine. Residues 632–649 are compositionally biased toward basic and acidic residues; sequence MGPKESSDEDRDSKLPSK. 3 positions are modified to phosphoserine: S637, S638, and S644. The interval 652–690 is interaction with CDKN2A; it reads KKKKKKSKEEEEKTTKKKSKHKKSKDKEEGKEDRKKKRK. The segment covering 666-675 has biased composition (basic residues); that stretch reads TKKKSKHKKS. The span at 707 to 725 shows a compositional bias: gly residues; that stretch reads LGGGAPGSRHPGGGDYEEL.

This sequence belongs to the small GTPase superfamily. Rab family.

It localises to the nucleus. Its subcellular location is the cytoplasm. In terms of biological role, may enhance cellular proliferation. May reduce growth inhibitory activity of CDKN2A. This chain is Rab-like protein 6 (Rabl6), found in Mus musculus (Mouse).